Consider the following 190-residue polypeptide: Secretory phospholipase A2 (190 aa).

Residues 1-15 (MKLAYFSSLLPLALA) form the signal peptide. Residues C62 and C78 are joined by a disulfide bond. Residue A65 coordinates Ca(2+). The active site involves H81. D82 is a Ca(2+) binding site.

This sequence belongs to the phospholipase A2 family. Ca(2+) is required as a cofactor.

Its subcellular location is the lipid droplet. The protein resides in the secreted. The enzyme catalyses a 1,2-diacyl-sn-glycero-3-phosphocholine + H2O = a 1-acyl-sn-glycero-3-phosphocholine + a fatty acid + H(+). Secretory phospholipase that catalyzes the calcium-dependent hydrolysis of the 2-acyl groups in 3-sn-phosphoglycerides. Increases the ability to utilize insect-derived nutrients and lipids, and promotes lipid dropplets accumulation. Plays a role in virulence, including more efficient penetration of the insect cuticle and evasion of host immune response by repressing the expression of host immunity genes. In Beauveria bassiana (strain ARSEF 2860) (White muscardine disease fungus), this protein is Secretory phospholipase A2.